Consider the following 261-residue polypeptide: Probable pectin methylesterase CGR2 (261 aa).

The Cytoplasmic segment spans residues 1 to 35; the sequence is MARRQVGSTRRVGDGGSFPFAGALHSKSRSSPLLS. A helical membrane pass occupies residues 36 to 56; that stretch reads ICLVLVGACLLIGYAYSGPGI. Residues 57-261 are Lumenal-facing; sequence FKSIKEVSKV…CQVFHLKPLH (205 aa). N-linked (GlcNAc...) asparagine glycosylation is present at Asn-174.

The protein belongs to the class I-like SAM-binding methyltransferase superfamily.

The protein localises to the golgi apparatus membrane. In terms of biological role, together with CGR3, required for homogalacturonan pectins (HG) methylesterification in the Golgi apparatus prior to integration into cell walls, essential for general growth and development. Promotes rosette growth. Impacts carbon (C) partitioning, photosynthesis and respiration efficiency by influencing leaf mesophyll cell walls morphology and physiology; pectin methylesterification modulates both expansion and positioning of cells in leaves, probably by changing cell walls plasticity. This Arabidopsis thaliana (Mouse-ear cress) protein is Probable pectin methylesterase CGR2.